The primary structure comprises 856 residues: Leucine--tRNA ligase (856 aa).

Residues 53-63 (PYPSGNLHMGH) carry the 'HIGH' region motif. The short motif at 622–626 (KMSKS) is the 'KMSKS' region element. Residue Lys-625 coordinates ATP.

This sequence belongs to the class-I aminoacyl-tRNA synthetase family.

It localises to the cytoplasm. It catalyses the reaction tRNA(Leu) + L-leucine + ATP = L-leucyl-tRNA(Leu) + AMP + diphosphate. This chain is Leucine--tRNA ligase, found in Prochlorococcus marinus (strain MIT 9215).